We begin with the raw amino-acid sequence, 542 residues long: Chondroitin sulfate N-acetylgalactosaminyltransferase 2 (542 aa).

Residues 1–11 (MPRRGLILHTR) lie on the Cytoplasmic side of the membrane. A helical; Signal-anchor for type II membrane protein transmembrane segment spans residues 12-32 (THWLLLGLALLCSLVLFMYLL). Residues 33–542 (ECAPQTDGNA…AYRTNSEAVG (510 aa)) lie on the Lumenal side of the membrane. N-linked (GlcNAc...) asparagine glycosylation is present at asparagine 41. Positions 59–105 (ALLQEQEEHYQTRATSLKRQIAQLKQELQEMSEKMRSLQERRNVGAN) form a coiled coil. Asparagine 333 carries an N-linked (GlcNAc...) asparagine glycan. Positions 369 and 486 each coordinate a divalent metal cation.

It belongs to the chondroitin N-acetylgalactosaminyltransferase family. As to expression, ubiquitous.

It localises to the golgi apparatus. It is found in the golgi stack membrane. It catalyses the reaction 3-O-(beta-D-GlcA-(1-&gt;3)-beta-D-Gal-(1-&gt;3)-beta-D-Gal-(1-&gt;4)-beta-D-Xyl)-L-seryl-[protein] + UDP-N-acetyl-alpha-D-galactosamine = 3-O-(beta-D-GalNAc-(1-&gt;4)-beta-D-GlcA-(1-&gt;3)-beta-D-Gal-(1-&gt;3)-beta-D-Gal-(1-&gt;4)-beta-D-Xyl)-L-seryl-[protein] + UDP + H(+). Transfers 1,4-N-acetylgalactosamine (GalNAc) from UDP-GalNAc to the non-reducing end of glucuronic acid (GlcUA). Required for addition of the first GalNAc to the core tetrasaccharide linker and for elongation of chondroitin chains. The chain is Chondroitin sulfate N-acetylgalactosaminyltransferase 2 (CSGALNACT2) from Homo sapiens (Human).